The primary structure comprises 350 residues: Probable peptidyl-alpha-hydroxyglycine alpha-amidating lyase pgal-1 (350 aa).

An N-terminal signal peptide occupies residues 1–19 (MRASTACLVALLAPFYISA). Residues 46-90 (DRELIGLFNPSKEIGQVSGLAVNKNGHIVAFHRSGRVWDEKSFND) form an NHL 1 repeat. N-linked (GlcNAc...) asparagine glycosylation is present at N103. NHL repeat units follow at residues 113–154 (KKVI…IDAK), 162–206 (LGEK…FDAK), and 212–256 (QINA…FSAG). 2 disulfide bridges follow: C176/C196 and C241/C252.

Belongs to the peptidyl-alpha-hydroxyglycine alpha-amidating lyase family. The cofactor is Zn(2+).

The protein localises to the secreted. It carries out the reaction a [peptide]-C-terminal (2S)-2-hydroxyglycine = a [peptide]-C-terminal amide + glyoxylate. Functionally, probable lyase that catalyzes an essential reaction in C-terminal alpha-amidation of peptides. Mediates the dismutation of the unstable peptidyl(2-hydroxyglycine) intermediate to glyoxylate and the corresponding desglycine peptide amide. C-terminal amidation of peptides such as neuropeptides is essential for full biological activity. This Caenorhabditis elegans protein is Probable peptidyl-alpha-hydroxyglycine alpha-amidating lyase pgal-1.